Here is a 1505-residue protein sequence, read N- to C-terminus: ABC transporter C family member 13 (1505 aa).

12 helical membrane passes run 11–31, 54–68, 71–91, 102–122, 131–151, 171–191, 313–333, 336–356, 367–387, 421–441, 447–467, and 534–554; these read EAAA…LLLL, AVDG…VGAW, AALA…SYEV, ALLL…LAMQ, FPVL…GIAY, MVAN…GVMG, AFAA…SYFV, LSGK…FFVA, WYLG…AMVY, AWYF…LAIL, IAMV…VPVA, and FVFW…CILL. Residues 314–589 enclose the ABC transmembrane type-1 1 domain; that stretch reads FAAVNTIVSY…FPDLISMIAQ (276 aa). The ABC transporter 1 domain maps to 623–846; sequence ININDATFSW…GTDFNALVCA (224 aa). 658 to 665 provides a ligand contact to ATP; the sequence is GVIGSGKS. Residues 881-897 are compositionally biased toward polar residues; that stretch reads DNLKNKVSNNEKPSSTR. Positions 881–919 are disordered; that stretch reads DNLKNKVSNNEKPSSTRGIKEKKKKPEERKKKRSVQEEE. Residues 904 to 919 show a composition bias toward basic and acidic residues; it reads KKPEERKKKRSVQEEE. Transmembrane regions (helical) follow at residues 940-960, 980-1000, 1055-1077, 1081-1103, 1149-1169, and 1174-1194; these read GTLI…QIAS, SVVL…FVFV, IAFR…AVMS, WQVL…YYIA, LLDC…WLCL, and LSTF…PGTI. The ABC transmembrane type-1 2 domain occupies 945–1215; it reads LIILAQTMFQ…GLNLNARMSR (271 aa). The ABC transporter 2 domain maps to 1262–1496; it reads IELVDLKVRY…KSSMFMQLVS (235 aa). Residue 1296 to 1303 coordinates ATP; the sequence is GRTGSGKS.

It belongs to the ABC transporter superfamily. ABCC family. Conjugate transporter (TC 3.A.1.208) subfamily.

It localises to the membrane. In terms of biological role, ABC transporter that may affect phytic acid transport and compartmentalization. May function directly or indirectly in removing phytic acid from the cytosol or in vesicle trafficking. Required for phytic acid accumulation in developing seeds. Phytic acid is the primary storage form of phosphorus in cereal grains and other plant seeds. This Oryza sativa subsp. indica (Rice) protein is ABC transporter C family member 13.